A 255-amino-acid polypeptide reads, in one-letter code: tRNA (guanine-N(7)-)-methyltransferase (255 aa).

Residues 1–31 (MMHDDPNEAGLPPHNDAIPDETAEGADEVNP) are disordered. Acidic residues predominate over residues 18–27 (IPDETAEGAD). S-adenosyl-L-methionine-binding residues include Glu86, Glu111, Asp138, and Asp161. The active site involves Asp161. Residues Lys165, Asp197, and 232-235 (TKFE) each bind substrate.

Belongs to the class I-like SAM-binding methyltransferase superfamily. TrmB family.

It carries out the reaction guanosine(46) in tRNA + S-adenosyl-L-methionine = N(7)-methylguanosine(46) in tRNA + S-adenosyl-L-homocysteine. It functions in the pathway tRNA modification; N(7)-methylguanine-tRNA biosynthesis. Functionally, catalyzes the formation of N(7)-methylguanine at position 46 (m7G46) in tRNA. The chain is tRNA (guanine-N(7)-)-methyltransferase from Burkholderia cenocepacia (strain HI2424).